We begin with the raw amino-acid sequence, 498 residues long: Cytochrome P450 71B31 (498 aa).

The chain crosses the membrane as a helical span at residues 3–23; that stretch reads MFLGLLFLFPLFFILFKNLLP. A heme-binding site is contributed by Cys-441.

Belongs to the cytochrome P450 family. Heme is required as a cofactor.

Its subcellular location is the membrane. In Arabidopsis thaliana (Mouse-ear cress), this protein is Cytochrome P450 71B31 (CYP71B31).